The primary structure comprises 253 residues: uncharacterized protein (253 aa).

Over residues 200–209 (TGREHAHKGP) the composition is skewed to basic and acidic residues. 2 disordered regions span residues 200-225 (TGREHAHKGPELTTPDSGLPRPPNPA) and 234-253 (QHSPPLGTSTPSAVLLSAAT).

As to expression, most abundantly expressed in gastrointestinal tissues. Expressed at lower levels in kidney and placenta. Expressed in fetal brain, liver, placenta, kidney and lung.

This is an uncharacterized protein from Homo sapiens (Human).